We begin with the raw amino-acid sequence, 218 residues long: Large ribosomal subunit protein uL3 (218 aa).

At Q153 the chain carries N5-methylglutamine.

It belongs to the universal ribosomal protein uL3 family. In terms of assembly, part of the 50S ribosomal subunit. Forms a cluster with proteins L14 and L19. Post-translationally, methylated by PrmB.

Its function is as follows. One of the primary rRNA binding proteins, it binds directly near the 3'-end of the 23S rRNA, where it nucleates assembly of the 50S subunit. The polypeptide is Large ribosomal subunit protein uL3 (Alkalilimnicola ehrlichii (strain ATCC BAA-1101 / DSM 17681 / MLHE-1)).